The primary structure comprises 210 residues: Actin-related protein 3C (210 aa).

The N-terminal stretch at 1–21 is a signal peptide; sequence MFESFNVPGLYIAVQAVLALA.

The protein belongs to the actin family. As to expression, expressed in kidney, stomach, spleen, bone marrow, uterus, testis, placenta, skeletal muscle, mammary gland, lung, fetal liver, and fetal kidney, but not detected in small intestine, brain, and thymus. Expressed in low-metastatic lung adenocarcinoma cells but not in high-metastatic ones.

Functionally, may play a role in the suppression of metastatic potential in lung adenoma carcinoma cells. The protein is Actin-related protein 3C (ACTR3C) of Homo sapiens (Human).